Consider the following 1112-residue polypeptide: MAEQEASGLQVLLHTLQSSSDKESILTILKVLGDLLSVGTDRRIHYMISKGGSEALLQTLVDTARTAPPDYDILLPLFRLLAKVGLRDKKIGRKALELEALDVTLILARKNLSHGQNLLHCLWALRVFASSVSMGAMLGINGAMELLFKVITPYTRKRTQAIRAATEVLAALLKSKSNGRRAVNRGYVTSLLGLHQDWHSHDTANAYVQIRRGLLLCLRHIAALRSGREAFLAAQGMEILFSTTQNCLDDKSMEPVISVVLQILRQCYPTSPLPLVTASSAYAFPVPGCITTEPPHDLPEEDFEDDGDDEVDKDSDTEDGKVEDDDLETDVNKLSSKPGLDRPEEELMQYEVMCLELSYSFEELQSKLGDDLNSEKTQYANHHHIPAAASSKQHCYSKDQSSCGQEREYAVQTSLLCRVKTGRSTVHLGSKKNPGVNLYQNVQSNSLRRDSSESEIPDIQASPKADAWDVDAIFCPRMSASFSNSTRTREVVKVIDKLLQTHLKRVPFHDPYLYMAKARRTSSVVDFKMMAFPDVWGHCPPPTTQPMLERKCGVQRIRIFEDIRRLIQPSDVINKVVFSLDEPWPLQDNASNCLRFFSKFESGNLRKAIQVREFEYDLLVNADVNSTQHQQWFYFKVSGMQAAIPYHFNIINCEKPNSQFNYGMQPTLYSVKEALLGKPTWIRTGHEICYYKNHYRQSTAVAGGASGKCYYTLTFAVTFPHSEDVCYLAYHYPYTYTALMTHLDILEKSVNLKEVYFRQDVLCQTLGGNPCPLVTITAMPESNSDEHLEQFRHRPYQVITARVHPGESNASWVMKGTLEFLVSSDPVARLLRENFIFKIIPMLNPDGVINGNHRCSLSGEDLNRQWLSPSAHLQPTIYHAKGLLYHLSSIGRSPVVFCDFHGHSQKKNVFLYGCSIKETLWQAACTVGTSTILEEVNYRTLPKILDKLAPAFTMSSCSFLVEKSRASTARVVVWREMGVSRSYTMESSYCGCNQGPYQCTQRLLERTKNERAHPVDGLQGLQFGTRELEEMGAMFCLGLLILELKSASCSHQLLAQAATLLSAEEDALDQHLQRLKSSNFLPKHIWFAYHFFAITNFFKMNLLLHVSPVCDT.

Positions 291-345 (TTEPPHDLPEEDFEDDGDDEVDKDSDTEDGKVEDDDLETDVNKLSSKPGLDRPEE) are disordered. The segment covering 299–329 (PEEDFEDDGDDEVDKDSDTEDGKVEDDDLET) has biased composition (acidic residues). The Peptidase M14 domain maps to 732 to 1022 (YPYTYTALMT…HPVDGLQGLQ (291 aa)). Residues His804, Glu807, and His901 each contribute to the Zn(2+) site. The active-site Proton donor/acceptor is Glu986.

The protein belongs to the peptidase M14 family. Interacts with MYLK. Interacts with TCF4. Requires Zn(2+) as cofactor. In terms of tissue distribution, expressed in corneal endothelium.

Its subcellular location is the cytoplasm. It localises to the cytosol. The enzyme catalyses (L-glutamyl)(n+1)-gamma-L-glutamyl-L-glutamyl-[protein] + H2O = (L-glutamyl)(n)-gamma-L-glutamyl-L-glutamyl-[protein] + L-glutamate. It carries out the reaction C-terminal L-alpha-aminoacyl-L-glutamyl-L-glutamyl-[tubulin] + H2O = C-terminal L-alpha-aminoacyl-L-glutamyl-[tubulin] + L-glutamate. In terms of biological role, metallocarboxypeptidase that mediates deglutamylation of tubulin and non-tubulin target proteins. Catalyzes the removal of polyglutamate side chains present on the gamma-carboxyl group of glutamate residues within the C-terminal tail of tubulin protein. Specifically cleaves tubulin long-side-chains, while it is not able to remove the branching point glutamate. Also catalyzes the removal of polyglutamate residues from the carboxy-terminus of non-tubulin proteins such as MYLK. The polypeptide is Cytosolic carboxypeptidase 4 (Homo sapiens (Human)).